A 280-amino-acid polypeptide reads, in one-letter code: 2-dehydro-3-deoxyphosphooctonate aldolase (280 aa).

This sequence belongs to the KdsA family.

It is found in the cytoplasm. The enzyme catalyses D-arabinose 5-phosphate + phosphoenolpyruvate + H2O = 3-deoxy-alpha-D-manno-2-octulosonate-8-phosphate + phosphate. It participates in carbohydrate biosynthesis; 3-deoxy-D-manno-octulosonate biosynthesis; 3-deoxy-D-manno-octulosonate from D-ribulose 5-phosphate: step 2/3. Its pathway is bacterial outer membrane biogenesis; lipopolysaccharide biosynthesis. The polypeptide is 2-dehydro-3-deoxyphosphooctonate aldolase (Coxiella burnetii (strain CbuK_Q154) (Coxiella burnetii (strain Q154))).